A 376-amino-acid chain; its full sequence is Heat stress transcription factor A-2a (376 aa).

A disordered region spans residues 137 to 168 (LKTIKRRRPPPSSPPSSSSSSSSSQHQQQPAA). Residues 151 to 160 (PSSSSSSSSS) are compositionally biased toward low complexity. Residues 182-229 (VNRLQRDKSVLIAEVVKLRQEQQTTRAQMQAMEERISAAEQKQQQMTV) are a coiled coil. The segment at 185–235 (LQRDKSVLIAEVVKLRQEQQTTRAQMQAMEERISAAEQKQQQMTVFLARAM) is hydrophobic repeat HR-A/B. The Nuclear localization signal signature appears at 265–269 (KKRRR). Disordered stretches follow at residues 296–319 (VAEP…DTES) and 332–362 (KQRE…DDDD). Residues 307–316 (GDGGGGGGGD) show a composition bias toward gly residues. Residues 318–325 (ESFWMQLL) carry the AHA motif. Acidic residues predominate over residues 352–362 (VDNDEEDDDDD). The short motif at 366 to 373 (LVQSIYHL) is the Nuclear export signal element.

This sequence belongs to the HSF family. Class A subfamily. In terms of assembly, homotrimer. Exhibits temperature-dependent phosphorylation.

Its subcellular location is the cytoplasm. The protein localises to the nucleus. Its function is as follows. Transcriptional regulator that specifically binds DNA of heat shock promoter elements (HSE). The chain is Heat stress transcription factor A-2a (HSFA2A) from Oryza sativa subsp. japonica (Rice).